Reading from the N-terminus, the 681-residue chain is Peroxisomal acyl-coenzyme A oxidase 2 (681 aa).

At serine 9 the chain carries Phosphoserine. 5 positions are modified to N6-succinyllysine: lysine 66, lysine 137, lysine 453, lysine 561, and lysine 667. Residues 679–681 (SNL) carry the Microbody targeting signal motif.

The protein belongs to the acyl-CoA oxidase family. In terms of assembly, homodimer. FAD is required as a cofactor. In terms of tissue distribution, liver and kidney.

The protein localises to the peroxisome. The catalysed reaction is (25R)-3alpha,7alpha,12alpha-trihydroxy-5beta-cholestan-26-oyl-CoA + A + H2O = (24R,25R)-3alpha,7alpha,12alpha,24-tetrahydroxy-5beta-cholestan-26-oyl-CoA + AH2. The enzyme catalyses (25S)-3alpha,7alpha,12alpha-trihydroxy-5beta-cholestan-26-oyl-CoA + O2 = (24E)-3alpha,7alpha,12alpha-trihydroxy-5beta-cholest-24-en-26-oyl-CoA + H2O2. Oxidizes the CoA esters of the bile acid intermediates di- and tri-hydroxycholestanoic acids. Capable of oxidizing short as well as long chain 2-methyl branched fatty acids. The sequence is that of Peroxisomal acyl-coenzyme A oxidase 2 from Oryctolagus cuniculus (Rabbit).